Here is a 520-residue protein sequence, read N- to C-terminus: Sterile alpha motif domain-containing protein 3 (520 aa).

Residues 4–71 (WSVEQVCSWL…KYKQNTQGLK (68 aa)) enclose the SAM domain. The segment at 85–114 (TEAARDYRDEESSSPARHGEQMPSFYPAEN) is disordered.

The polypeptide is Sterile alpha motif domain-containing protein 3 (SAMD3) (Homo sapiens (Human)).